A 347-amino-acid chain; its full sequence is Isopentenyl-diphosphate delta-isomerase (347 aa).

Residues Met-1–Gly-31 form a disordered region. Residues Phe-8 to Leu-20 show a composition bias toward basic and acidic residues. Residue Arg-11–Lys-12 participates in substrate binding. FMN contacts are provided by residues Ser-72, Ser-73–Thr-75, Ser-103, and Asn-132. A substrate-binding site is contributed by Ser-103–Arg-105. Gln-166 serves as a coordination point for substrate. Mg(2+) is bound at residue Glu-167. Residues Lys-198, Ser-223, Thr-228, Gly-279–Arg-281, and Ala-300–Lys-301 each bind FMN.

This sequence belongs to the IPP isomerase type 2 family. In terms of assembly, homooctamer. Dimer of tetramers. It depends on FMN as a cofactor. NADPH serves as cofactor. The cofactor is Mg(2+).

Its subcellular location is the cytoplasm. It carries out the reaction isopentenyl diphosphate = dimethylallyl diphosphate. In terms of biological role, involved in the biosynthesis of isoprenoids. Catalyzes the 1,3-allylic rearrangement of the homoallylic substrate isopentenyl (IPP) to its allylic isomer, dimethylallyl diphosphate (DMAPP). The chain is Isopentenyl-diphosphate delta-isomerase from Bdellovibrio bacteriovorus (strain ATCC 15356 / DSM 50701 / NCIMB 9529 / HD100).